A 457-amino-acid polypeptide reads, in one-letter code: MALWGGRFSQAADQRFKQFNDSLRFDYRLAEQDIIGSVAWSKALVTVGVLNADEQQQLEQALSVLLEEVQANPHAILASDAEDIHSWVETKLIDKVGDLGKKLHTGRSRNDQVATDLKLWCKFQITELQTAVQQLQQALVMTAEANQDAVMPGYTHLQRAQPVTFAHWCLAYVEMLSRDESRLQDTLKRLDVSPLGCGALAGTAYAIDREQLAGWLGFASATRNSLDSVSDRDHVLELLSDASIGMVHLSRFAEDLIFFNSGEAAFVDLSDRVTSGSSLMPQKKNPDALELIRGKCGRVQGALTGMTMTLKGLPLAYNKDMQEDKEGLFDALNTWLDCLHMAALVLDGIQVKRPRCKEAAEQGYANATELADYLVAKGVPFREAHHIVGEAVVEAIRQGKALEALALSDLQQFSSVIGDDVYPILALQSCLDKRVAKGGVSPQQVASAIAEAKARLF.

It belongs to the lyase 1 family. Argininosuccinate lyase subfamily.

The protein localises to the cytoplasm. It carries out the reaction 2-(N(omega)-L-arginino)succinate = fumarate + L-arginine. Its pathway is amino-acid biosynthesis; L-arginine biosynthesis; L-arginine from L-ornithine and carbamoyl phosphate: step 3/3. The chain is Argininosuccinate lyase from Yersinia pseudotuberculosis serotype IB (strain PB1/+).